A 33-amino-acid polypeptide reads, in one-letter code: Mu-theraphotoxin-Ssp1a (33 aa).

3 disulfide bridges follow: Cys-2–Cys-17, Cys-9–Cys-22, and Cys-16–Cys-29. Leu-33 bears the Leucine amide mark.

This sequence belongs to the neurotoxin 10 (Hwtx-1) family. 22 (Htx-4) subfamily. In terms of tissue distribution, expressed by the venom gland.

Its subcellular location is the secreted. Functionally, gating modifier toxin that traps voltage-sensing domain II of voltage-gated sodium channels in the resting state without significantly altering the voltage-dependence of activation and inactivation, or delay in recovery from inactivation. Inhibits hNav1.7/SCN9A (IC(50)=134 nM), followed in rank order of potency by Nav1.6/SCN8A (IC(50)=191 nM), Nav1.2/SCN2A (IC(50)=239 nM), Nav1.3/SCN3A (IC(50)=547 nM) and Nav1.1/SCN1A (IC(50)=674 nM). Its binding to Nav1.2, Nav1.3 and Nav1.7 is slowly reversible and incomplete, with ~25% of Nav1.2, ~50% of Nav1.3 and ~40% of Nav1.7 channels recovering from block after a 30 minutes washout, respectively. Binds in the aqueous cleft formed between the S1-S2 and S3-S4 loops of each channel subtype, primarily targeting the S3-S4 loop. This is Mu-theraphotoxin-Ssp1a from Selenotypus sp. (Feather-legged tarantula).